The following is a 138-amino-acid chain: Small ribosomal subunit protein uS11c (138 aa).

Residues 1 to 22 (MAKPILRVGSRKNTRSASRKNV) are disordered. The span at 9 to 22 (GSRKNTRSASRKNV) shows a compositional bias: basic residues.

This sequence belongs to the universal ribosomal protein uS11 family. As to quaternary structure, part of the 30S ribosomal subunit.

Its subcellular location is the plastid. It localises to the chloroplast. In Draba nemorosa (Woodland whitlowgrass), this protein is Small ribosomal subunit protein uS11c.